A 1062-amino-acid polypeptide reads, in one-letter code: Platelet-derived growth factor receptor alpha (1062 aa).

An N-terminal signal peptide occupies residues 1–27 (MFPPSSAPLLLPQLEELVVPLHTAFTL). Ig-like C2-type domains lie at 28 to 96 (TCQG…VYVP), 91 to 184 (IYVY…VHGW), 190 to 281 (LHVE…KQIA), 287 to 381 (SEFM…RTVS), and 389 to 493 (PAVI…IKLV). At 28–504 (TCQGEATIAW…NGPHPELTVA (477 aa)) the chain is on the extracellular side. A disulfide bridge links C29 with C74. 2 N-linked (GlcNAc...) asparagine glycosylation sites follow: N79 and N132. 2 cysteine pairs are disulfide-bonded: C124–C165 and C211–C265. N-linked (GlcNAc...) asparagine glycosylation is found at N273, N333, N366, N433, and N444. C410 and C477 are joined by a disulfide. Residues 505-525 (AAVLVLLVIVIISLIVLVVIW) traverse the membrane as a helical segment. Residues 526–1062 (KQKPRYEIRW…CSDLVEDSFL (537 aa)) lie on the Cytoplasmic side of the membrane. Phosphotyrosine; by autocatalysis is present on residues Y548 and Y550. Residues 569 to 945 (LVLGRILGSG…HYERVNHEFL (377 aa)) form the Protein kinase domain. ATP is bound by residues 575–583 (LGSGAFGKV) and K603. Y697, Y708, Y719, Y731, and Y739 each carry phosphotyrosine; by autocatalysis. A disordered region spans residues 734 to 754 (LQGSNYDHPPSQKGSNDGEMD). Residue D793 is the Proton acceptor of the active site. Phosphotyrosine; by autocatalysis is present on residues Y824 and Y963. Basic and acidic residues predominate over residues 975–986 (KDRESGFDEQRL). A disordered region spans residues 975–1034 (KDRESGFDEQRLSSDSGYIIPLPDLDPISDEEYGKRNRHSSQTSEESAIETGSSSSTFAK). A Phosphotyrosine; by autocatalysis modification is found at Y992. Residues 1014-1032 (SSQTSEESAIETGSSSSTF) are compositionally biased toward polar residues.

It belongs to the protein kinase superfamily. Tyr protein kinase family. CSF-1/PDGF receptor subfamily. In terms of assembly, interacts with homodimeric pdgfa, pdgfb and pdgfc, and with heterodimers formed by pdgfa and pdgfb. monomer in the absence of bound ligand. Interaction with dimeric pdgfa, pdgfb and/or pdgfc leads to receptor dimerization, where both pdgfra homodimers and heterodimers with pdgfrb are observed. In terms of processing, ubiquitinated, leading to its degradation. Autophosphorylated on tyrosine residues upon ligand binding. Autophosphorylation occurs in trans, i.e. one subunit of the dimeric receptor phosphorylates tyrosine residues on the other subunit.

The protein resides in the cell membrane. It catalyses the reaction L-tyrosyl-[protein] + ATP = O-phospho-L-tyrosyl-[protein] + ADP + H(+). Its activity is regulated as follows. Present in an inactive conformation in the absence of bound ligand. Binding of pdgfa and/or pdgfb leads to dimerization and activation by autophosphorylation on tyrosine residues. Its function is as follows. Tyrosine-protein kinase that acts as a cell-surface receptor for pdgfa, pdgfb and pdgfc and plays an essential role in the regulation of embryonic development, cell proliferation, survival and chemotaxis. Depending on the context, promotes or inhibits cell proliferation and cell migration. Plays an important role in the differentiation of bone marrow-derived mesenchymal stem cells. Required for normal skeleton development. Required for normal development of the gastrointestinal tract. Plays a role in cell migration and chemotaxis in wound healing. Plays a role in platelet activation, secretion of agonists from platelet granules, and in thrombin-induced platelet aggregation. Binding of its cognate ligands - homodimeric pdgfa, homodimeric pdgfb, heterodimers formed by pdgfa and pdgfb or homodimeric pdgfc -leads to the activation of several signaling cascades; the response depends on the nature of the bound ligand and is modulated by the formation of heterodimers between pdgfra and pdgfrb. Phosphorylates pik3r1, plcg1, and ptpn11. Activation of plcg1 leads to the production of the cellular signaling molecules diacylglycerol and inositol 1,4,5-trisphosphate, mobilization of cytosolic Ca(2+) and the activation of protein kinase C. Phosphorylates pik3r1, the regulatory subunit of phosphatidylinositol 3-kinase, and thereby mediates activation of the AKT1 signaling pathway. Mediates activation of hras and of the MAP kinases mapk1/erk2 and/or mapk3/erk1. Promotes activation of STAT family members stat1, stat3 and stat5a and/or stat5b. Receptor signaling is down-regulated by protein phosphatases that dephosphorylate the receptor and its down-stream effectors, and by rapid internalization of the activated receptor. This Takifugu rubripes (Japanese pufferfish) protein is Platelet-derived growth factor receptor alpha (pdgfra).